The following is a 352-amino-acid chain: Isoflavone-7-O-methyltransferase 6 (352 aa).

Residue 118-127 participates in substrate binding; it reads VLDPTLSGSY. The S-adenosyl-L-methionine site is built by Gly196, Asp219, Asp239, Met240, and Lys253. His257 (proton acceptor) is an active-site residue.

This sequence belongs to the class I-like SAM-binding methyltransferase superfamily. Cation-independent O-methyltransferase family. COMT subfamily. In terms of assembly, homodimer.

The enzyme catalyses a 7-hydroxyisoflavone + S-adenosyl-L-methionine = a 7-methoxyisoflavone + S-adenosyl-L-homocysteine + H(+). The protein operates within phytoalexin biosynthesis; medicarpin biosynthesis. Transfers a methyl group to 7-hydroxyls of the isoflavones daidzein, genistein and 6,7,4'-trihydroxyisoflavone. Can also methylate (+)6a-hydroxymaackiain with lower efficiency. The protein is Isoflavone-7-O-methyltransferase 6 of Medicago sativa (Alfalfa).